The chain runs to 232 residues: 5'-methylthioadenosine/S-adenosylhomocysteine nucleosidase (232 aa).

Glutamate 12 serves as the catalytic Proton acceptor. Substrate-binding positions include glycine 78, isoleucine 152, and 173-174 (ME). The active-site Proton donor is aspartate 197.

The protein belongs to the PNP/UDP phosphorylase family. MtnN subfamily. In terms of assembly, homodimer.

It catalyses the reaction S-adenosyl-L-homocysteine + H2O = S-(5-deoxy-D-ribos-5-yl)-L-homocysteine + adenine. The enzyme catalyses S-methyl-5'-thioadenosine + H2O = 5-(methylsulfanyl)-D-ribose + adenine. The catalysed reaction is 5'-deoxyadenosine + H2O = 5-deoxy-D-ribose + adenine. It participates in amino-acid biosynthesis; L-methionine biosynthesis via salvage pathway; S-methyl-5-thio-alpha-D-ribose 1-phosphate from S-methyl-5'-thioadenosine (hydrolase route): step 1/2. Catalyzes the irreversible cleavage of the glycosidic bond in both 5'-methylthioadenosine (MTA) and S-adenosylhomocysteine (SAH/AdoHcy) to adenine and the corresponding thioribose, 5'-methylthioribose and S-ribosylhomocysteine, respectively. Also cleaves 5'-deoxyadenosine, a toxic by-product of radical S-adenosylmethionine (SAM) enzymes, into 5-deoxyribose and adenine. Thus, is required for in vivo function of the radical SAM enzymes biotin synthase and lipoic acid synthase, that are inhibited by 5'-deoxyadenosine accumulation. The chain is 5'-methylthioadenosine/S-adenosylhomocysteine nucleosidase from Erwinia tasmaniensis (strain DSM 17950 / CFBP 7177 / CIP 109463 / NCPPB 4357 / Et1/99).